A 403-amino-acid chain; its full sequence is Putative transport protein TP_0553 (403 aa).

Transmembrane regions (helical) follow at residues 10-30 (ISLF…FVPY), 31-51 (LTVL…YRAL), 92-112 (AAVF…FIAI), 202-222 (LYFF…ALPL), 243-263 (KGLF…YGIF), 271-291 (LAML…CVWL), 293-313 (VGIS…LFVA), and 350-370 (TFGF…FTVI).

The protein belongs to the autoinducer-2 exporter (AI-2E) (TC 2.A.86) family.

It is found in the cell membrane. This chain is Putative transport protein TP_0553, found in Treponema pallidum (strain Nichols).